The primary structure comprises 49 residues: Small ribosomal subunit protein eS31 (49 aa).

Residues Cys21, Cys24, Cys39, and Cys42 each coordinate Zn(2+). Residues 21-42 (CPRCGPGTFLADHKNRLTCGKC) form a C4-type zinc finger.

Belongs to the eukaryotic ribosomal protein eS31 family. As to quaternary structure, part of the 30S ribosomal subunit. Zn(2+) serves as cofactor.

The polypeptide is Small ribosomal subunit protein eS31 (Methanosarcina barkeri (strain Fusaro / DSM 804)).